The primary structure comprises 265 residues: MTGLPDAPEVPPVAVEIFGTRTGSAARYVELLATDGVERGLIGPRETDRLWDRHVLNCAVLADVVPVQADVVDVGSGAGLPGIPLALARPDLRVVLLEPMERRCRFLHEVVATIGLEDQISVVRGRAPDAGIGPDGRRFGIAVARAVAPLERLGAILFPMLRPGGVMLAMRGSRILEELQDARSGLGTQGWHPVDVVRCGEGRVEEPARVLRAVRSSQRTRAESRGGRGDGERHDGRQVRRTSRDSLRSREVGRDQPTRGQSRST.

S-adenosyl-L-methionine-binding residues include Gly-75, Leu-80, and Arg-145. Residues 212-265 (RAVRSSQRTRAESRGGRGDGERHDGRQVRRTSRDSLRSREVGRDQPTRGQSRST) are disordered. Residues 220 to 257 (TRAESRGGRGDGERHDGRQVRRTSRDSLRSREVGRDQP) are compositionally biased toward basic and acidic residues.

The protein belongs to the methyltransferase superfamily. RNA methyltransferase RsmG family.

It localises to the cytoplasm. Its function is as follows. Specifically methylates the N7 position of guanine in position 518 of 16S rRNA. This chain is Ribosomal RNA small subunit methyltransferase G, found in Frankia casuarinae (strain DSM 45818 / CECT 9043 / HFP020203 / CcI3).